Consider the following 590-residue polypeptide: UvrABC system protein C (590 aa).

The 78-residue stretch at 14 to 91 (DQPGCYLMKD…IKKHDPKYNV (78 aa)) folds into the GIY-YIG domain. The UVR domain occupies 196-231 (NEVKKELEEKMHEAAENLEFERAKELRDQIAHIEST).

It belongs to the UvrC family. In terms of assembly, interacts with UvrB in an incision complex.

The protein resides in the cytoplasm. Its function is as follows. The UvrABC repair system catalyzes the recognition and processing of DNA lesions. UvrC both incises the 5' and 3' sides of the lesion. The N-terminal half is responsible for the 3' incision and the C-terminal half is responsible for the 5' incision. The protein is UvrABC system protein C of Bacillus subtilis (strain 168).